The chain runs to 155 residues: Endoribonuclease YbeY (155 aa).

Residues His-110, His-114, and His-120 each coordinate Zn(2+).

Belongs to the endoribonuclease YbeY family. It depends on Zn(2+) as a cofactor.

The protein resides in the cytoplasm. Single strand-specific metallo-endoribonuclease involved in late-stage 70S ribosome quality control and in maturation of the 3' terminus of the 16S rRNA. In Deinococcus radiodurans (strain ATCC 13939 / DSM 20539 / JCM 16871 / CCUG 27074 / LMG 4051 / NBRC 15346 / NCIMB 9279 / VKM B-1422 / R1), this protein is Endoribonuclease YbeY.